A 445-amino-acid polypeptide reads, in one-letter code: Serine--tRNA ligase (445 aa).

250–252 (TAE) serves as a coordination point for L-serine. 281 to 283 (RAE) lines the ATP pocket. L-serine is bound at residue glutamate 304. 368 to 371 (EISS) serves as a coordination point for ATP. L-serine is bound at residue serine 404.

Belongs to the class-II aminoacyl-tRNA synthetase family. Type-1 seryl-tRNA synthetase subfamily. Homodimer. The tRNA molecule binds across the dimer.

The protein resides in the cytoplasm. It carries out the reaction tRNA(Ser) + L-serine + ATP = L-seryl-tRNA(Ser) + AMP + diphosphate + H(+). The enzyme catalyses tRNA(Sec) + L-serine + ATP = L-seryl-tRNA(Sec) + AMP + diphosphate + H(+). Its pathway is aminoacyl-tRNA biosynthesis; selenocysteinyl-tRNA(Sec) biosynthesis; L-seryl-tRNA(Sec) from L-serine and tRNA(Sec): step 1/1. Functionally, catalyzes the attachment of serine to tRNA(Ser). Is also able to aminoacylate tRNA(Sec) with serine, to form the misacylated tRNA L-seryl-tRNA(Sec), which will be further converted into selenocysteinyl-tRNA(Sec). In Azorhizobium caulinodans (strain ATCC 43989 / DSM 5975 / JCM 20966 / LMG 6465 / NBRC 14845 / NCIMB 13405 / ORS 571), this protein is Serine--tRNA ligase.